Consider the following 169-residue polypeptide: Secreted LysM effector Blys5 (169 aa).

Residues 1-19 (MKLSVISAVFVSLAAAAAA) form the signal peptide. 2 consecutive LysM domains span residues 47-94 (TYYQ…YYCV) and 121-167 (QWYK…NVCV).

It belongs to the secreted LysM effector family.

Its function is as follows. Secreted effector that enables the plant pathogenic fungus to manipulate host defenses for successful infection. Required for the full virulence to infect insect hosts. Protects fungal hyphae against the hydrolytic activity of chitinase and plays an important role in evasion of insect immunities. Binds chitin and can additionally bind chitosan and cellulose. Coats and protects the cell walls of insect pathogens from host cell recognition and additionally shields fungal cells from the hydrolysis of insect chitinases. The protein is Secreted LysM effector Blys5 of Beauveria bassiana (strain ARSEF 2860) (White muscardine disease fungus).